Consider the following 832-residue polypeptide: Elongation factor 2 (832 aa).

In terms of domain architecture, tr-type G spans 17–336; sequence HNIRNMSVIA…MIVTHLPSPA (320 aa). 26–33 contributes to the GTP binding site; it reads AHVDHGKS. Residues Thr-57 and Thr-59 each carry the phosphothreonine modification. Residues 152-155 and 207-209 each bind GTP; these read NKVD and SGL. The interval 580 to 608 is disordered; sequence AEPLPDGLTDDIEEGKVSPRDDPKERSNL. Basic and acidic residues predominate over residues 593-608; that stretch reads EGKVSPRDDPKERSNL. A Diphthamide modification is found at His-689.

The protein belongs to the TRAFAC class translation factor GTPase superfamily. Classic translation factor GTPase family. EF-G/EF-2 subfamily.

The protein resides in the cytoplasm. The enzyme catalyses GTP + H2O = GDP + phosphate + H(+). Its function is as follows. Catalyzes the GTP-dependent ribosomal translocation step during translation elongation. During this step, the ribosome changes from the pre-translocational (PRE) to the post-translocational (POST) state as the newly formed A-site-bound peptidyl-tRNA and P-site-bound deacylated tRNA move to the P and E sites, respectively. Catalyzes the coordinated movement of the two tRNA molecules, the mRNA and conformational changes in the ribosome. The chain is Elongation factor 2 from Cryptosporidium parvum.